Reading from the N-terminus, the 256-residue chain is Ribonuclease 3 (256 aa).

The RNase III domain occupies 3–125 (LDALQQRLGY…IVGAVFLDAG (123 aa)). E38 is a binding site for Mg(2+). D42 is an active-site residue. Positions 111 and 114 each coordinate Mg(2+). The active site involves E114. Positions 152-222 (DAKTLLQEYL…AKLALDEVQK (71 aa)) constitute a DRBM domain. Residues 229 to 256 (KRSRAERTGKTRKQPVPPDPQLSLRLKE) form a disordered region.

This sequence belongs to the ribonuclease III family. In terms of assembly, homodimer. The cofactor is Mg(2+).

It is found in the cytoplasm. The catalysed reaction is Endonucleolytic cleavage to 5'-phosphomonoester.. Its function is as follows. Digests double-stranded RNA. Involved in the processing of primary rRNA transcript to yield the immediate precursors to the large and small rRNAs (23S and 16S). Processes some mRNAs, and tRNAs when they are encoded in the rRNA operon. Processes pre-crRNA and tracrRNA of type II CRISPR loci if present in the organism. The chain is Ribonuclease 3 from Cupriavidus pinatubonensis (strain JMP 134 / LMG 1197) (Cupriavidus necator (strain JMP 134)).